The primary structure comprises 363 residues: UDP-N-acetylglucosamine--N-acetylmuramyl-(pentapeptide) pyrophosphoryl-undecaprenol N-acetylglucosamine transferase (363 aa).

Residues 13 to 15 (TGG), asparagine 125, arginine 166, serine 195, isoleucine 249, 268 to 273 (ALTVSE), and glutamine 294 contribute to the UDP-N-acetyl-alpha-D-glucosamine site.

It belongs to the glycosyltransferase 28 family. MurG subfamily.

It is found in the cell inner membrane. The catalysed reaction is di-trans,octa-cis-undecaprenyl diphospho-N-acetyl-alpha-D-muramoyl-L-alanyl-D-glutamyl-meso-2,6-diaminopimeloyl-D-alanyl-D-alanine + UDP-N-acetyl-alpha-D-glucosamine = di-trans,octa-cis-undecaprenyl diphospho-[N-acetyl-alpha-D-glucosaminyl-(1-&gt;4)]-N-acetyl-alpha-D-muramoyl-L-alanyl-D-glutamyl-meso-2,6-diaminopimeloyl-D-alanyl-D-alanine + UDP + H(+). It functions in the pathway cell wall biogenesis; peptidoglycan biosynthesis. Its function is as follows. Cell wall formation. Catalyzes the transfer of a GlcNAc subunit on undecaprenyl-pyrophosphoryl-MurNAc-pentapeptide (lipid intermediate I) to form undecaprenyl-pyrophosphoryl-MurNAc-(pentapeptide)GlcNAc (lipid intermediate II). This Cellvibrio japonicus (strain Ueda107) (Pseudomonas fluorescens subsp. cellulosa) protein is UDP-N-acetylglucosamine--N-acetylmuramyl-(pentapeptide) pyrophosphoryl-undecaprenol N-acetylglucosamine transferase.